The chain runs to 334 residues: L-lactate dehydrogenase B chain (334 aa).

Alanine 2 carries the N-acetylalanine modification. Position 7 is an N6-acetyllysine (lysine 7). 2 positions are modified to phosphoserine: serine 11 and serine 44. Residues 30–58 (GQVGMACAISILGKSLADELALVDVLEDK) and arginine 100 contribute to the NAD(+) site. Position 58 is an N6-acetyllysine (lysine 58). Substrate is bound at residue arginine 107. Lysine 119 is subject to N6-acetyllysine. Residue asparagine 139 participates in NAD(+) binding. Positions 139 and 170 each coordinate substrate. The active-site Proton acceptor is the histidine 194. Tyrosine 240 is modified (phosphotyrosine). Substrate is bound at residue threonine 249. The residue at position 329 (lysine 329) is an N6-acetyllysine.

This sequence belongs to the LDH/MDH superfamily. LDH family. In terms of assembly, homotetramer. Interacts with PTEN upstream reading frame protein MP31; the interaction leads to inhibition of mitochondrial lactate dehydrogenase activity, preventing conversion of lactate to pyruvate in mitochondria.

The protein localises to the cytoplasm. It localises to the mitochondrion inner membrane. It carries out the reaction (S)-lactate + NAD(+) = pyruvate + NADH + H(+). Its pathway is fermentation; pyruvate fermentation to lactate; (S)-lactate from pyruvate: step 1/1. Functionally, interconverts simultaneously and stereospecifically pyruvate and lactate with concomitant interconversion of NADH and NAD(+). This Mus musculus (Mouse) protein is L-lactate dehydrogenase B chain (Ldhb).